The sequence spans 691 residues: Elongation factor G (691 aa).

The region spanning 8–283 is the tr-type G domain; that stretch reads EDYRNFGIMA…AVVDYLPTPI (276 aa). Residues 17–24, 81–85, and 135–138 contribute to the GTP site; these read AHIDAGKT, DTPGH, and NKMD.

Belongs to the TRAFAC class translation factor GTPase superfamily. Classic translation factor GTPase family. EF-G/EF-2 subfamily.

The protein localises to the cytoplasm. Functionally, catalyzes the GTP-dependent ribosomal translocation step during translation elongation. During this step, the ribosome changes from the pre-translocational (PRE) to the post-translocational (POST) state as the newly formed A-site-bound peptidyl-tRNA and P-site-bound deacylated tRNA move to the P and E sites, respectively. Catalyzes the coordinated movement of the two tRNA molecules, the mRNA and conformational changes in the ribosome. This is Elongation factor G from Beijerinckia indica subsp. indica (strain ATCC 9039 / DSM 1715 / NCIMB 8712).